The following is a 684-amino-acid chain: Homoaconitase, mitochondrial (684 aa).

Residues C337, C397, and C400 each contribute to the [4Fe-4S] cluster site.

The protein belongs to the aconitase/IPM isomerase family. It depends on [4Fe-4S] cluster as a cofactor.

The protein resides in the mitochondrion. It catalyses the reaction (2R,3S)-homoisocitrate = cis-homoaconitate + H2O. It functions in the pathway amino-acid biosynthesis; L-lysine biosynthesis via AAA pathway; L-alpha-aminoadipate from 2-oxoglutarate: step 3/5. In terms of biological role, catalyzes the reversible hydration of cis-homoaconitate to (2R,3S)-homoisocitrate, a step in the alpha-aminoadipate pathway for lysine biosynthesis. This Candida albicans (strain SC5314 / ATCC MYA-2876) (Yeast) protein is Homoaconitase, mitochondrial (LYS4).